Reading from the N-terminus, the 411-residue chain is Snake venom metalloproteinase VMP1 (411 aa).

The N-terminal stretch at 1–20 (MIQVLLVTICLAAFPYQGSS) is a signal peptide. Positions 21 to 189 (IILESGNVND…KKAFQLNLTP (169 aa)) are excised as a propeptide. The Peptidase M12B domain occupies 197–393 (RYVELVIIAD…KNPQCILNKP (197 aa)). Ca(2+)-binding residues include E200 and D284. 3 cysteine pairs are disulfide-bonded: C308-C388, C348-C372, and C350-C355. N311 is a glycosylation site (N-linked (GlcNAc...) asparagine). A Zn(2+)-binding site is contributed by H333. E334 is an active-site residue. Positions 337 and 343 each coordinate Zn(2+). The Ca(2+) site is built by C388, N391, V403, N406, L408, and E410.

Belongs to the venom metalloproteinase (M12B) family. P-I subfamily. In terms of assembly, monomer. Requires Zn(2+) as cofactor. In terms of tissue distribution, expressed by the venom gland.

The protein resides in the secreted. Inhibited by EDTA and 1,10-phenanthroline, but not by PMSF. Functionally, this venom zinc protease has fibrinolytic activity. The recombinant enzyme cleaves both alpha- (FGA) and beta-chains (FGB) of fibrinogen, but not the gamma-chain. The recombinant protein does not produce hemorrhage in mice and does not have effect on ADP- or collagen-stimulated platelet aggregation. This Agkistrodon piscivorus leucostoma (Western cottonmouth) protein is Snake venom metalloproteinase VMP1.